A 661-amino-acid polypeptide reads, in one-letter code: Kininogen-1 (661 aa).

The first 20 residues, Met1 to Gly20, serve as a signal peptide directing secretion. The Cystatin kininogen-type 1 domain occupies Cys28–Lys131. Intrachain disulfides connect Cys28/Cys631, Cys83/Cys94, Cys107/Cys125, Cys141/Cys144, Cys205/Cys217, Cys228/Cys247, Cys263/Cys266, Cys327/Cys339, and Cys350/Cys369. A glycan (N-linked (GlcNAc...) asparagine) is linked at Asn82. One can recognise a Cystatin kininogen-type 2 domain in the interval Thr150 to Asp253. 2 N-linked (GlcNAc...) asparagine glycosylation sites follow: Asn168 and Asn204. N-linked (GlcNAc...) asparagine glycosylation is present at Asn242. Residues Val272–Thr375 enclose the Cystatin kininogen-type 3 domain. The residue at position 331 (Ser331) is a Phosphoserine. Disordered stretches follow at residues Tyr405–Gly471, Asp485–Ser583, and Ala626–Ser661. Basic residues-rich tracts occupy residues Lys434–Gly471 and Thr492–His526. Positions Thr541–Thr555 are enriched in low complexity. Acidic residues predominate over residues Glu650–Ser661.

As to quaternary structure, isoform LMW interacts with CRISP3. Post-translationally, bradykinin is released from kininogen by plasma kallikrein. In terms of processing, phosphorylated by FAM20C in the extracellular medium. Bradykinin is inactivated by ACE, which removes the dipeptide Arg-Phe from its C-terminus. Plasma.

Its subcellular location is the secreted. The protein resides in the extracellular space. Functionally, kininogens are inhibitors of thiol proteases. HMW-kininogen plays an important role in blood coagulation by helping to position optimally prekallikrein and factor XI next to factor XII; HMW-kininogen inhibits the thrombin- and plasmin-induced aggregation of thrombocytes. LMW-kininogen inhibits the aggregation of thrombocytes. LMW-kininogen is in contrast to HMW-kininogen not involved in blood clotting. Its function is as follows. The active peptide bradykinin is a potent vasodilatator that is released from HMW-kininogen shows a variety of physiological effects: (A) influence in smooth muscle contraction, (B) induction of hypotension, (C) natriuresis and diuresis, (D) decrease in blood glucose level, (E) it is a mediator of inflammation and causes (E1) increase in vascular permeability, (E2) stimulation of nociceptors (4E3) release of other mediators of inflammation (e.g. prostaglandins), (F) it has a cardioprotective effect (directly via bradykinin action, indirectly via endothelium-derived relaxing factor action). The protein is Kininogen-1 (Kng1) of Mus musculus (Mouse).